The chain runs to 620 residues: Schwann cell myelin protein (620 aa).

Residues 1–17 (MELLVLTVLLMGTGCIS) form the signal peptide. The Extracellular segment spans residues 18-516 (APWAAWMPPK…GGLVWAKVGP (499 aa)). The Ig-like V-type domain maps to 28-106 (MAALSGTCVQ…RDCTLNIARL (79 aa)). Disulfide bonds link Cys35–Cys164, Cys40–Cys99, and Cys158–Cys216. N-acetylneuraminate is bound at residue Arg117. Ig-like C2-type domains are found at residues 151 to 233 (GSEA…DVGL), 239 to 322 (PQVV…LRVA), 325 to 407 (PRAP…FNIS), and 414 to 495 (VLPA…NRHG). An N-linked (GlcNAc...) asparagine glycan is attached at Asn222. Cys260 and Cys304 are joined by a disulfide. Residues Asn314 and Asn331 are each glycosylated (N-linked (GlcNAc...) asparagine). Cys346 and Cys391 form a disulfide bridge. Asn405 carries an N-linked (GlcNAc...) asparagine glycan. Intrachain disulfides connect Cys420-Cys429 and Cys431-Cys488. Asn449 is a glycosylation site (N-linked (GlcNAc...) asparagine). Residues 517-536 (VGAVVAFAIVIAVVCYLSQS) form a helical membrane-spanning segment. At 537-620 (RRKKGAGSPE…PPEYAEIRVK (84 aa)) the chain is on the cytoplasmic side. 2 disordered regions span residues 539–562 (KKGA…DPDL) and 583–620 (VKEG…IRVK).

The protein belongs to the immunoglobulin superfamily. SIGLEC (sialic acid binding Ig-like lectin) family. In terms of tissue distribution, exclusively expressed by myelinating and nonmyelinating Schwann cells and oligodendrocytes.

Its subcellular location is the membrane. The chain is Schwann cell myelin protein (SMP) from Coturnix japonica (Japanese quail).